The sequence spans 553 residues: Glucose-6-phosphate isomerase (553 aa).

The Proton donor role is filled by Glu-355. Active-site residues include His-386 and Lys-513.

This sequence belongs to the GPI family.

The protein resides in the cytoplasm. It carries out the reaction alpha-D-glucose 6-phosphate = beta-D-fructose 6-phosphate. It functions in the pathway carbohydrate biosynthesis; gluconeogenesis. The protein operates within carbohydrate degradation; glycolysis; D-glyceraldehyde 3-phosphate and glycerone phosphate from D-glucose: step 2/4. Functionally, catalyzes the reversible isomerization of glucose-6-phosphate to fructose-6-phosphate. This Baumannia cicadellinicola subsp. Homalodisca coagulata protein is Glucose-6-phosphate isomerase.